Here is a 116-residue protein sequence, read N- to C-terminus: U30-theraphotoxin-Cg1a (116 aa).

The first 17 residues, 1-17 (MKLCVLTIASLLVTVTS), serve as a signal peptide directing secretion. A propeptide spanning residues 18–53 (LETQKEIAEGSELTREETPSLVEHKEDEAAAASEKR) is cleaved from the precursor. Residues 24–46 (IAEGSELTREETPSLVEHKEDEA) are disordered. 4 cysteine pairs are disulfide-bonded: C55–C69, C62–C75, C66–C112, and C68–C88.

It belongs to the neurotoxin 03 (Tx2) family. 02 subfamily. HNTX-XV sub-subfamily. Expressed by the venom gland.

The protein resides in the secreted. Its function is as follows. Probable ion channel inhibitor. The sequence is that of U30-theraphotoxin-Cg1a from Chilobrachys guangxiensis (Chinese earth tiger tarantula).